Consider the following 195-residue polypeptide: ATP-dependent Clp protease proteolytic subunit (195 aa).

S101 functions as the Nucleophile in the catalytic mechanism. H126 is an active-site residue.

Belongs to the peptidase S14 family.

It localises to the plastid. Its subcellular location is the chloroplast stroma. It catalyses the reaction Hydrolysis of proteins to small peptides in the presence of ATP and magnesium. alpha-casein is the usual test substrate. In the absence of ATP, only oligopeptides shorter than five residues are hydrolyzed (such as succinyl-Leu-Tyr-|-NHMec, and Leu-Tyr-Leu-|-Tyr-Trp, in which cleavage of the -Tyr-|-Leu- and -Tyr-|-Trp bonds also occurs).. Cleaves peptides in various proteins in a process that requires ATP hydrolysis. Has a chymotrypsin-like activity. Plays a major role in the degradation of misfolded proteins. This Bigelowiella natans (Pedinomonas minutissima) protein is ATP-dependent Clp protease proteolytic subunit.